We begin with the raw amino-acid sequence, 485 residues long: Rhamnulokinase (485 aa).

8 to 12 lines the ATP pocket; that stretch reads ASSGR. Residues G78 and 231 to 233 each bind substrate; that span reads HDT. D232 functions as the Proton acceptor in the catalytic mechanism. Residue T254 participates in ATP binding. N291 lines the substrate pocket. Residue Q299 coordinates ATP. C348 and C365 are disulfide-bonded. G397 serves as a coordination point for ATP. C408 and C412 are joined by a disulfide.

Belongs to the rhamnulokinase family. Mg(2+) serves as cofactor.

The catalysed reaction is L-rhamnulose + ATP = L-rhamnulose 1-phosphate + ADP + H(+). It functions in the pathway carbohydrate degradation; L-rhamnose degradation; glycerone phosphate from L-rhamnose: step 2/3. Its function is as follows. Involved in the catabolism of L-rhamnose (6-deoxy-L-mannose). Catalyzes the transfer of the gamma-phosphate group from ATP to the 1-hydroxyl group of L-rhamnulose to yield L-rhamnulose 1-phosphate. This Yersinia pestis bv. Antiqua (strain Angola) protein is Rhamnulokinase.